The primary structure comprises 20 residues: uncharacterized protein (20 aa).

This is an uncharacterized protein from Serratia marcescens.